Consider the following 43-residue polypeptide: Cytochrome b559 subunit beta (43 aa).

A helical membrane pass occupies residues 18–34; it reads WLAVHTLAIPTVFFLGA. Residue H22 participates in heme binding.

This sequence belongs to the PsbE/PsbF family. Heterodimer of an alpha subunit and a beta subunit. PSII is composed of 1 copy each of membrane proteins PsbA, PsbB, PsbC, PsbD, PsbE, PsbF, PsbH, PsbI, PsbJ, PsbK, PsbL, PsbM, PsbT, PsbX, PsbY, PsbZ, Psb30/Ycf12, peripheral proteins PsbO, CyanoQ (PsbQ), PsbU, PsbV and a large number of cofactors. It forms dimeric complexes. It depends on heme b as a cofactor.

Its subcellular location is the cellular thylakoid membrane. In terms of biological role, this b-type cytochrome is tightly associated with the reaction center of photosystem II (PSII). PSII is a light-driven water:plastoquinone oxidoreductase that uses light energy to abstract electrons from H(2)O, generating O(2) and a proton gradient subsequently used for ATP formation. It consists of a core antenna complex that captures photons, and an electron transfer chain that converts photonic excitation into a charge separation. The chain is Cytochrome b559 subunit beta from Synechococcus sp. (strain JA-2-3B'a(2-13)) (Cyanobacteria bacterium Yellowstone B-Prime).